The sequence spans 194 residues: Mitochondrial import inner membrane translocase subunit Tim22 (194 aa).

2 cysteine pairs are disulfide-bonded: C69–C141 and C160–C179. 3 consecutive transmembrane segments (helical) span residues A74–I94, M123–V143, and A170–D190.

This sequence belongs to the Tim17/Tim22/Tim23 family. As to quaternary structure, component of the TIM22 complex, whose core is composed of TIMM22, associated with peripheral protein FXC1/TIMM10B and the 70 kDa heterohexamer. In most cases, the 70 kDa complex is composed of TIMM9 and TIMM10 (TIMM10A or TIMM10B). A small fraction of the 70 kDa complex is composed of TIMM8 (TIMM8A/DDP1 or TIMM8B/DDP2) and TIMM13. The TIM22 complex also contains AGK and TIMM29. Interacts directly with TIMM9, TIMM10A and FXC1/TIMM10B. Interacts (when oxidized) with TIMM29; interaction is direct. Disulfide bonds promote efficient assembly of the TIM22 complex.

It localises to the mitochondrion inner membrane. Essential core component of the TIM22 complex, a complex that mediates the import and insertion of multi-pass transmembrane proteins into the mitochondrial inner membrane. In the TIM22 complex, it constitutes the voltage-activated and signal-gated channel. Forms a twin-pore translocase that uses the membrane potential as external driving force in 2 voltage-dependent steps. The chain is Mitochondrial import inner membrane translocase subunit Tim22 (TIMM22) from Bos taurus (Bovine).